We begin with the raw amino-acid sequence, 198 residues long: 3-isopropylmalate dehydratase small subunit (198 aa).

It belongs to the LeuD family. LeuD type 1 subfamily. As to quaternary structure, heterodimer of LeuC and LeuD.

The enzyme catalyses (2R,3S)-3-isopropylmalate = (2S)-2-isopropylmalate. The protein operates within amino-acid biosynthesis; L-leucine biosynthesis; L-leucine from 3-methyl-2-oxobutanoate: step 2/4. In terms of biological role, catalyzes the isomerization between 2-isopropylmalate and 3-isopropylmalate, via the formation of 2-isopropylmaleate. This Corynebacterium jeikeium (strain K411) protein is 3-isopropylmalate dehydratase small subunit.